A 421-amino-acid chain; its full sequence is Glutamate-1-semialdehyde 2,1-aminomutase 1 (421 aa).

Position 258 is an N6-(pyridoxal phosphate)lysine (K258).

The protein belongs to the class-III pyridoxal-phosphate-dependent aminotransferase family. HemL subfamily. Pyridoxal 5'-phosphate serves as cofactor.

The protein localises to the cytoplasm. It catalyses the reaction (S)-4-amino-5-oxopentanoate = 5-aminolevulinate. The protein operates within porphyrin-containing compound metabolism; protoporphyrin-IX biosynthesis; 5-aminolevulinate from L-glutamyl-tRNA(Glu): step 2/2. This is Glutamate-1-semialdehyde 2,1-aminomutase 1 from Cenarchaeum symbiosum (strain A).